We begin with the raw amino-acid sequence, 339 residues long: DNA-directed RNA polymerase subunit alpha (339 aa).

Residues 1–233 (MVREEVAGST…DLFLPFLHAE (233 aa)) are alpha N-terminal domain (alpha-NTD). The interval 264–339 (KKGIPLNCIF…IDLLKNKLSF (76 aa)) is alpha C-terminal domain (alpha-CTD).

The protein belongs to the RNA polymerase alpha chain family. In plastids the minimal PEP RNA polymerase catalytic core is composed of four subunits: alpha, beta, beta', and beta''. When a (nuclear-encoded) sigma factor is associated with the core the holoenzyme is formed, which can initiate transcription.

Its subcellular location is the plastid. It localises to the chloroplast. It carries out the reaction RNA(n) + a ribonucleoside 5'-triphosphate = RNA(n+1) + diphosphate. Its function is as follows. DNA-dependent RNA polymerase catalyzes the transcription of DNA into RNA using the four ribonucleoside triphosphates as substrates. The polypeptide is DNA-directed RNA polymerase subunit alpha (Psathyrostachys stoloniformis).